The following is a 235-amino-acid chain: Thymidylate kinase (235 aa).

An ATP-binding site is contributed by 10-17; that stretch reads GINGVEKS.

It belongs to the thymidylate kinase family.

The catalysed reaction is dTMP + ATP = dTDP + ADP. It functions in the pathway pyrimidine metabolism; dTTP biosynthesis. Catalyzes the conversion of dTMP to dTDP. The protein is Thymidylate kinase (TMK) of African swine fever virus (isolate Pig/Kenya/KEN-50/1950) (ASFV).